We begin with the raw amino-acid sequence, 747 residues long: Probable alpha-galactosidase C (747 aa).

The signal sequence occupies residues 1–24 (MVAFMNSATFVAGLFTLWSRPIWA). Asn36, Asn182, Asn190, Asn362, Asn429, and Asn449 each carry an N-linked (GlcNAc...) asparagine glycan. Asp507 acts as the Nucleophile in catalysis. The N-linked (GlcNAc...) asparagine glycan is linked to Asn534. Residue Asp569 is the Proton donor of the active site.

The protein belongs to the glycosyl hydrolase 36 family. Homotetramer. Mg(2+) is required as a cofactor. The cofactor is NAD(+).

The protein localises to the secreted. It carries out the reaction Hydrolysis of terminal, non-reducing alpha-D-galactose residues in alpha-D-galactosides, including galactose oligosaccharides, galactomannans and galactolipids.. Its function is as follows. Hydrolyzes a variety of simple alpha-D-galactoside as well as more complex molecules such as oligosaccharides and polysaccharides. The polypeptide is Probable alpha-galactosidase C (aglC) (Aspergillus terreus (strain NIH 2624 / FGSC A1156)).